A 1018-amino-acid chain; its full sequence is MPRSSATARKNQSNRNENGASSGKKVAKQKSNGHLNGSLNGGSTPGSVSSSQVDLPSSRSTSDSAIAPAAAASSNLNGISDSSKEDCNGREKLNGYTKGNADMSYVQTNGAGSQNGGDHAGQASHRTDKSATGAKRSTSNASINPLQLASTILKSCPMYDTIAILIFLLQLPPMVLTLVQFLFASLTFMPPSGASAGSLSSNFDIFQGPAGTPSLSTMIAMDGFCLLIWALLMWTWAQNFALDLAHVQVAITLGGGGSGKNGGVNTLCVGIVLILHLIRSKGIQDFVIGHLLSSNIISPDLLAQYSHLLPTEFRRTESQTSPSWIRSLLAVHILAQAGTAMARRSMAKNRSPNPPRPGKRVDTEASAGSQTQIDSAFESGASVSSYLGPDGQLITPTAHKDGRDRLLSAKKRRRQANQVRSRQPFWAALASTKVTVMREYEHSRALSKTARGLPMTENDLQGVSFDDGLVWITDVDASTIKFAAGDFASADDSGLSGACEDGRLGNEEIEPFYVCVNGALWATATISRVPDAQKGSGMVHWRGEVSGLAPNCAYTCSFMRSDTDEEICAISVKTPVTNDTEQFSLVSPPPQPSYRPSSPTTTLKNSIVNAEAKLNEKRSRLRKAKNDHKLIISKIRKELDNYNHRLHSGTDENRQKQRSLQLERNIRQTEEATALLEGQLDSLENIPEEELREWSDQKAKYDQELQLLNSAKEELVSARSAVAREVSSLESDLGSTVQRRERLQSRRTRVNEQYERIVSANAQGLNERERRAAEQFAREQDQAKLEANFNEQFGSIGQSVQEYQLRAQQIWQQCDAIEQAIQQQQQRMLLDSAPLTPEGNLPGTNPFSETSALPLGALTSTAPNSRSLLGLSFPAIKSSPLQTISSALDASSSHPTSPVQPPSFLNFPASPLVNATSHLDSDFTYRDRSFSNRSARSSLYGSEFLDSSRRQPFQIDLPELLGEKRNSGSDSTALKSGLRPVSSPFQRAGSRGSGSGSNGSGGSGSGSGSPSSAYGKPN.

Residues 1-21 are compositionally biased toward polar residues; that stretch reads MPRSSATARKNQSNRNENGAS. Residues 1–138 form a disordered region; the sequence is MPRSSATARK…KSATGAKRST (138 aa). The segment covering 45-74 has biased composition (low complexity); it reads PGSVSSSQVDLPSSRSTSDSAIAPAAAASS. The span at 82–93 shows a compositional bias: basic and acidic residues; that stretch reads SSKEDCNGREKL. Helical transmembrane passes span 162-182, 217-237, and 258-278; these read IAILIFLLQLPPMVLTLVQFL, TMIAMDGFCLLIWALLMWTWA, and SGKNGGVNTLCVGIVLILHLI. Disordered regions lie at residues 342 to 371, 581 to 602, and 962 to 1018; these read ARRSMAKNRSPNPPRPGKRVDTEASAGSQT, EQFSLVSPPPQPSYRPSSPTTT, and GEKR…GKPN. Residues 601–788 are a coiled coil; it reads TTLKNSIVNA…EQDQAKLEAN (188 aa). The segment covering 991-1007 has biased composition (gly residues); sequence RGSGSGSNGSGGSGSGS.

Belongs to the acrB family.

The protein resides in the membrane. Its function is as follows. Component of the regulatory network controlling carbon source utilization through ubiquitination and deubiquitination involving creA, creB, creC, creD and acrB. Involved in resistance to acriflavine, and required for normal growth on a range of sole carbon sources, including fructose, cellobiose, raffinose, and starch, and reduced utilization of amino acids, including GABA and beta-alanine, as sole carbon and nitrogen sources. The polypeptide is Probable ubiquitination network signaling protein acrB (acrB) (Aspergillus clavatus (strain ATCC 1007 / CBS 513.65 / DSM 816 / NCTC 3887 / NRRL 1 / QM 1276 / 107)).